A 741-amino-acid polypeptide reads, in one-letter code: Catalase-peroxidase (741 aa).

The signal sequence occupies residues 1–23; that stretch reads MLKKIVTALGMSGMLLASSNAIA. The tryptophyl-tyrosyl-methioninium (Trp-Tyr) (with M-249) cross-link spans 102–223; that stretch reads WHDAGTYRIY…YAATQMGLIY (122 aa). The active-site Proton acceptor is His103. Residues 223–249 constitute a cross-link (tryptophyl-tyrosyl-methioninium (Tyr-Met) (with W-102)); the sequence is YVNPEGPDGKPDIKGAASEIRQAFRAM. Position 264 (His264) interacts with heme b.

It belongs to the peroxidase family. Peroxidase/catalase subfamily. In terms of assembly, homodimer or homotetramer. The cofactor is heme b. Formation of the three residue Trp-Tyr-Met cross-link is important for the catalase, but not the peroxidase activity of the enzyme.

It carries out the reaction H2O2 + AH2 = A + 2 H2O. The enzyme catalyses 2 H2O2 = O2 + 2 H2O. Its function is as follows. Bifunctional enzyme with both catalase and broad-spectrum peroxidase activity. In Francisella tularensis subsp. tularensis (strain FSC 198), this protein is Catalase-peroxidase.